Here is a 465-residue protein sequence, read N- to C-terminus: ATP-dependent protease ATPase subunit HslU (465 aa).

ATP-binding positions include Val-19, 61–66 (GVGKTE), Asp-277, Glu-343, and Arg-415.

This sequence belongs to the ClpX chaperone family. HslU subfamily. As to quaternary structure, a double ring-shaped homohexamer of HslV is capped on each side by a ring-shaped HslU homohexamer. The assembly of the HslU/HslV complex is dependent on binding of ATP.

It is found in the cytoplasm. Functionally, ATPase subunit of a proteasome-like degradation complex; this subunit has chaperone activity. The binding of ATP and its subsequent hydrolysis by HslU are essential for unfolding of protein substrates subsequently hydrolyzed by HslV. HslU recognizes the N-terminal part of its protein substrates and unfolds these before they are guided to HslV for hydrolysis. In Geobacillus sp. (strain WCH70), this protein is ATP-dependent protease ATPase subunit HslU.